We begin with the raw amino-acid sequence, 509 residues long: Acetyl-coenzyme A carboxylase carboxyl transferase subunit beta, chloroplastic (509 aa).

A disordered region spans residues 164 to 216; that stretch reads HGSVCDGESHNSSEGESSSRRTHTKGVDLTIRESSNENERESSNENERKSSND. Composition is skewed to basic and acidic residues over residues 170–182 and 193–216; these read GESH…ESSS and TIRE…SSND. Residues 226–509 form the CoA carboxyltransferase N-terminal domain; the sequence is LWLQCENCYG…LNQNSNQVEC (284 aa). Positions 230, 233, 249, and 252 each coordinate Zn(2+). A C4-type zinc finger spans residues 230–252; the sequence is CENCYGLNYKKFLKSKMNICEQC. A disordered region spans residues 288-307; that stretch reads FDSEGEQEQEQEQEQEEEET.

The protein belongs to the AccD/PCCB family. Acetyl-CoA carboxylase is a heterohexamer composed of biotin carboxyl carrier protein, biotin carboxylase and 2 subunits each of ACCase subunit alpha and ACCase plastid-coded subunit beta (accD). Zn(2+) serves as cofactor.

It localises to the plastid. The protein resides in the chloroplast stroma. It catalyses the reaction N(6)-carboxybiotinyl-L-lysyl-[protein] + acetyl-CoA = N(6)-biotinyl-L-lysyl-[protein] + malonyl-CoA. It participates in lipid metabolism; malonyl-CoA biosynthesis; malonyl-CoA from acetyl-CoA: step 1/1. In terms of biological role, component of the acetyl coenzyme A carboxylase (ACC) complex. Biotin carboxylase (BC) catalyzes the carboxylation of biotin on its carrier protein (BCCP) and then the CO(2) group is transferred by the transcarboxylase to acetyl-CoA to form malonyl-CoA. This Ipomoea purpurea (Common morning glory) protein is Acetyl-coenzyme A carboxylase carboxyl transferase subunit beta, chloroplastic.